Consider the following 365-residue polypeptide: Putative outer membrane porin protein NmpC (365 aa).

The first 23 residues, 1 to 23, serve as a signal peptide directing secretion; that stretch reads MKKLTVAISAVAASVLMAMSAQA.

This sequence belongs to the Gram-negative porin family. As to quaternary structure, homotrimer.

Its subcellular location is the cell outer membrane. This chain is Putative outer membrane porin protein NmpC (nmpC), found in Escherichia coli (strain K12).